Reading from the N-terminus, the 266-residue chain is Vesicle-associated protein 4-1 (266 aa).

The tract at residues serine 28 to serine 57 is disordered. Positions arginine 76 to isoleucine 199 constitute an MSP domain. The stretch at aspartate 200 to proline 228 forms a coiled coil. Residues glutamate 219–proline 229 show a composition bias toward basic and acidic residues. The disordered stretch occupies residues glutamate 219–glutamate 239. Phosphoserine is present on serine 264.

This sequence belongs to the VAMP-associated protein (VAP) (TC 9.B.17) family.

Its function is as follows. May play a role in vesicle trafficking. The sequence is that of Vesicle-associated protein 4-1 (PVA41) from Arabidopsis thaliana (Mouse-ear cress).